We begin with the raw amino-acid sequence, 320 residues long: 3-ketodihydrosphingosine reductase TSC10 (320 aa).

The Cytoplasmic segment spans residues 1–254; that stretch reads MKFTLEDQVV…IIAKSLARGD (254 aa). NADP(+) is bound at residue leucine 11. NADPH is bound by residues glycine 14, serine 16, and glycine 18. The GXSXG motif lies at 14–18; sequence GGSQG. Leucine 19 is an NADP(+) binding site. 4 residues coordinate NADPH: arginine 41, arginine 45, aspartate 89, and leucine 90. Residue aspartate 89 participates in NADP(+) binding. Serine 166 acts as the Proton donor in catalysis. 3 residues coordinate NADP(+): tyrosine 180, lysine 184, and serine 213. Tyrosine 180 (proton acceptor) is an active-site residue. Lysine 184 serves as the catalytic Lowers pKa of active site Tyr. Residues 255–275 form a helical membrane-spanning segment; it reads DDVFTDFVGWMIMGMDLGLTA. The Lumenal segment spans residues 276 to 279; the sequence is KKSR. A helical transmembrane segment spans residues 280 to 300; sequence FVPLQWIFGVLSNILVVPFYM. The Cytoplasmic segment spans residues 301–320; that stretch reads VGCSWYIRKWFRENDGKKAN.

Belongs to the short-chain dehydrogenases/reductases (SDR) family. Dimer or tetramer.

The protein resides in the endoplasmic reticulum membrane. The enzyme catalyses sphinganine + NADP(+) = 3-oxosphinganine + NADPH + H(+). Its pathway is lipid metabolism; sphingolipid metabolism. Catalyzes the reduction of 3'-oxosphinganine (3-ketodihydrosphingosine/KDS) to sphinganine (dihydrosphingosine/DHS), the second step of de novo sphingolipid biosynthesis. The chain is 3-ketodihydrosphingosine reductase TSC10 from Saccharomyces cerevisiae (strain ATCC 204508 / S288c) (Baker's yeast).